A 331-amino-acid chain; its full sequence is Adenosine deaminase (331 aa).

Zn(2+) contacts are provided by H12 and H14. Substrate contacts are provided by H14, D16, and G170. H197 serves as a coordination point for Zn(2+). Catalysis depends on E200, which acts as the Proton donor. D278 is a Zn(2+) binding site.

It belongs to the metallo-dependent hydrolases superfamily. Adenosine and AMP deaminases family. Adenosine deaminase subfamily. Zn(2+) serves as cofactor.

The enzyme catalyses adenosine + H2O + H(+) = inosine + NH4(+). It carries out the reaction 2'-deoxyadenosine + H2O + H(+) = 2'-deoxyinosine + NH4(+). Functionally, catalyzes the hydrolytic deamination of adenosine and 2-deoxyadenosine. This is Adenosine deaminase from Clostridium botulinum (strain 657 / Type Ba4).